Consider the following 370-residue polypeptide: Lysophosphatidic acid receptor 4 (370 aa).

Topologically, residues 1–43 (MGDRRFIDFQFQDSNSSLRPRLGNATANNTCIVDDSFKYNLNG) are extracellular. N15, N24, and N28 each carry an N-linked (GlcNAc...) asparagine glycan. The helical transmembrane segment at 44–64 (AVYSVVFILGLITNSVSLFVF) threads the bilayer. Over 65-73 (CFRMKMRSE) the chain is Cytoplasmic. A helical membrane pass occupies residues 74–94 (TAIFITNLAVSDLLFVCTLPF). At 95 to 112 (KIFYNFNRHWPFGDTLCK) the chain is on the extracellular side. Cysteines 111 and 188 form a disulfide. The chain crosses the membrane as a helical span at residues 113 to 133 (ISGTAFLTNIYGSMLFLTCIS). At 134-155 (VDRFLAIVYPFRSRTIRTRRNS) the chain is on the cytoplasmic side. Residues 156–176 (AIVCAGVWILVLSGGISASLF) traverse the membrane as a helical segment. Topologically, residues 177 to 203 (STTNVNNATTTCFEGFSKRVWKTYLSK) are extracellular. N183 carries an N-linked (GlcNAc...) asparagine glycan. The helical transmembrane segment at 204 to 224 (ITIFIEVVGFIIPLILNVSCS) threads the bilayer. Over 225–254 (SVVLRTLRKPATLSQIGTNKKKVLKMITVH) the chain is Cytoplasmic. Residues 255–275 (MAVFVVCFVPYNSVLFLYALV) traverse the membrane as a helical segment. The Extracellular portion of the chain corresponds to 276 to 294 (RSQAITNCFLERFAKIMYP). The helical transmembrane segment at 295-315 (ITLCLATLNCCFDPFIYYFTL) threads the bilayer. The Cytoplasmic portion of the chain corresponds to 316 to 370 (ESFQKSFYINAHIRMESLFKTETPLTTKPSLPAIQEEVSDQTTNNGGELMLESTF).

It belongs to the G-protein coupled receptor 1 family. In terms of tissue distribution, high expression in ovary. Not detected in the brain regions thalamus, putamen, caudate, frontal cortex, pons, hypothalamus and hippocampus.

The protein resides in the cell membrane. Functionally, receptor for lysophosphatidic acid (LPA), a mediator of diverse cellular activities. Transduces a signal by increasing the intracellular calcium ions and by stimulating adenylyl cyclase activity. The rank order of potency for agonists of this receptor is 1-oleoyl- &gt; 1-stearoyl- &gt; 1-palmitoyl- &gt; 1-myristoyl- &gt; 1-alkyl- &gt; 1-alkenyl-LPA. This Homo sapiens (Human) protein is Lysophosphatidic acid receptor 4 (LPAR4).